The primary structure comprises 288 residues: 4-diphosphocytidyl-2-C-methyl-D-erythritol kinase (288 aa).

Lys-8 is an active-site residue. ATP is bound at residue 90 to 100 (PFGAGLGGGSS). Asp-132 is a catalytic residue.

This sequence belongs to the GHMP kinase family. IspE subfamily.

It carries out the reaction 4-CDP-2-C-methyl-D-erythritol + ATP = 4-CDP-2-C-methyl-D-erythritol 2-phosphate + ADP + H(+). The protein operates within isoprenoid biosynthesis; isopentenyl diphosphate biosynthesis via DXP pathway; isopentenyl diphosphate from 1-deoxy-D-xylulose 5-phosphate: step 3/6. Its function is as follows. Catalyzes the phosphorylation of the position 2 hydroxy group of 4-diphosphocytidyl-2C-methyl-D-erythritol. In Chlorobium chlorochromatii (strain CaD3), this protein is 4-diphosphocytidyl-2-C-methyl-D-erythritol kinase.